An 89-amino-acid chain; its full sequence is Small ribosomal subunit protein uS19 (89 aa).

This sequence belongs to the universal ribosomal protein uS19 family.

In terms of biological role, protein S19 forms a complex with S13 that binds strongly to the 16S ribosomal RNA. This Brachyspira hyodysenteriae (strain ATCC 49526 / WA1) protein is Small ribosomal subunit protein uS19.